The sequence spans 315 residues: 4-hydroxy-3-methylbut-2-enyl diphosphate reductase (315 aa).

A [4Fe-4S] cluster-binding site is contributed by cysteine 12. Positions 41 and 74 each coordinate (2E)-4-hydroxy-3-methylbut-2-enyl diphosphate. Dimethylallyl diphosphate-binding residues include histidine 41 and histidine 74. Histidine 41 and histidine 74 together coordinate isopentenyl diphosphate. Cysteine 96 contacts [4Fe-4S] cluster. Histidine 124 provides a ligand contact to (2E)-4-hydroxy-3-methylbut-2-enyl diphosphate. Histidine 124 contributes to the dimethylallyl diphosphate binding site. Residue histidine 124 coordinates isopentenyl diphosphate. The Proton donor role is filled by glutamate 126. Threonine 167 contributes to the (2E)-4-hydroxy-3-methylbut-2-enyl diphosphate binding site. Residue cysteine 197 participates in [4Fe-4S] cluster binding. Serine 225, serine 226, asparagine 227, and serine 269 together coordinate (2E)-4-hydroxy-3-methylbut-2-enyl diphosphate. Positions 225, 226, 227, and 269 each coordinate dimethylallyl diphosphate. Isopentenyl diphosphate-binding residues include serine 225, serine 226, asparagine 227, and serine 269.

Belongs to the IspH family. In terms of assembly, homodimer. Requires [4Fe-4S] cluster as cofactor.

It catalyses the reaction isopentenyl diphosphate + 2 oxidized [2Fe-2S]-[ferredoxin] + H2O = (2E)-4-hydroxy-3-methylbut-2-enyl diphosphate + 2 reduced [2Fe-2S]-[ferredoxin] + 2 H(+). The catalysed reaction is dimethylallyl diphosphate + 2 oxidized [2Fe-2S]-[ferredoxin] + H2O = (2E)-4-hydroxy-3-methylbut-2-enyl diphosphate + 2 reduced [2Fe-2S]-[ferredoxin] + 2 H(+). The protein operates within isoprenoid biosynthesis; dimethylallyl diphosphate biosynthesis; dimethylallyl diphosphate from (2E)-4-hydroxy-3-methylbutenyl diphosphate: step 1/1. It participates in isoprenoid biosynthesis; isopentenyl diphosphate biosynthesis via DXP pathway; isopentenyl diphosphate from 1-deoxy-D-xylulose 5-phosphate: step 6/6. Its function is as follows. Catalyzes the conversion of 1-hydroxy-2-methyl-2-(E)-butenyl 4-diphosphate (HMBPP) into a mixture of isopentenyl diphosphate (IPP) and dimethylallyl diphosphate (DMAPP). Acts in the terminal step of the DOXP/MEP pathway for isoprenoid precursor biosynthesis. The protein is 4-hydroxy-3-methylbut-2-enyl diphosphate reductase of Wigglesworthia glossinidia brevipalpis.